Here is a 76-residue protein sequence, read N- to C-terminus: MTVIRLTRIGRKKKPFYRVVVTDSRKRRDGGWIESIGYYNPLSEPKDIKIDKERLNYWKSVGAKMSERVEKLSQKA.

It belongs to the bacterial ribosomal protein bS16 family.

This is Small ribosomal subunit protein bS16 from Helicobacter pylori (strain HPAG1).